The following is a 1035-amino-acid chain: Cell-division control histidine kinase PdhS (1035 aa).

The tract at residues 1 to 613 (MSGSYPFIDI…HADGSEEPVD (613 aa)) is important for polar localization. The segment at 500-533 (QGLANTRAESETPVSETSSIEPVEPTPPVKTRSE) is disordered. The segment at 614 to 1035 (AHLNAIAWRG…VFPPTRVLAD (422 aa)) is interaction with DivK. Residues 659–730 (HVEELKTILD…YLHGLSGNGV (72 aa)) form the PAS domain. One can recognise a Histidine kinase domain in the interval 802-1031 (RISHEIRTPL…VVEIVFPPTR (230 aa)). The residue at position 805 (His-805) is a Phosphohistidine; by autocatalysis.

In terms of assembly, interacts with DivK.

Its subcellular location is the cytoplasm. The catalysed reaction is ATP + protein L-histidine = ADP + protein N-phospho-L-histidine.. In terms of biological role, functions as a polar differentiation marker. Essential protein that, by localizing in the old pole of dividing cells, controls cell division and maturation, probably through control of DivK phosphorylation status and cellular distribution, which in turn regulates CtrA, a transcriptional regulator of the minB operon. The asymmetrical localization of this protein is probably required for cells to enter a new division cycle. The protein is Cell-division control histidine kinase PdhS (pdhS) of Brucella melitensis biotype 1 (strain ATCC 23456 / CCUG 17765 / NCTC 10094 / 16M).